We begin with the raw amino-acid sequence, 103 residues long: Putative membrane protein insertion efficiency factor (103 aa).

This sequence belongs to the UPF0161 family.

It is found in the cell inner membrane. Its function is as follows. Could be involved in insertion of integral membrane proteins into the membrane. This chain is Putative membrane protein insertion efficiency factor, found in Chlamydia felis (strain Fe/C-56) (Chlamydophila felis).